The primary structure comprises 253 residues: MASSQSDSPPLFDLPVRPDFTIEWKIMREGLAPVAGLDEAGRGPLAGPVVAAAVVLDPDRIPEGLDDSKRLTAEARERLVQEIFEVAAAVSVASLCAASIDESNILKASLEAMRRALDGLCVRPAYALADGRDIPPGLPCPCRAVVKGDQRSQSIAAASMVAKVVRDRMMVRTGTLMPHYGFHSHVGYATERHREAITAYGPVTRLHRMSFSPFKTSGEEDRILASGDAAELIASAFSAADGLNGRDAEKEPV.

One can recognise an RNase H type-2 domain in the interval Ala-32 to Ile-223. Residues Asp-38, Glu-39, and Asp-130 each coordinate a divalent metal cation.

Belongs to the RNase HII family. Mn(2+) serves as cofactor. Mg(2+) is required as a cofactor.

The protein resides in the cytoplasm. The enzyme catalyses Endonucleolytic cleavage to 5'-phosphomonoester.. Endonuclease that specifically degrades the RNA of RNA-DNA hybrids. The sequence is that of Ribonuclease HII from Chelativorans sp. (strain BNC1).